The chain runs to 786 residues: Endonuclease MutS2 (786 aa).

332-339 (GPNTGGKT) is an ATP binding site. The region spanning 711–786 (VDLRGMDSIE…GTGVTIVELK (76 aa)) is the Smr domain.

The protein belongs to the DNA mismatch repair MutS family. MutS2 subfamily. Homodimer. Binds to stalled ribosomes, contacting rRNA.

Endonuclease that is involved in the suppression of homologous recombination and thus may have a key role in the control of bacterial genetic diversity. In terms of biological role, acts as a ribosome collision sensor, splitting the ribosome into its 2 subunits. Detects stalled/collided 70S ribosomes which it binds and splits by an ATP-hydrolysis driven conformational change. Acts upstream of the ribosome quality control system (RQC), a ribosome-associated complex that mediates the extraction of incompletely synthesized nascent chains from stalled ribosomes and their subsequent degradation. Probably generates substrates for RQC. In Clostridium kluyveri (strain NBRC 12016), this protein is Endonuclease MutS2.